The primary structure comprises 186 residues: CoB--CoM heterodisulfide reductase iron-sulfur subunit C 2 (186 aa).

2 consecutive 4Fe-4S ferredoxin-type domains span residues 26 to 56 (GEDI…AYRT) and 67 to 99 (LDDV…TEII). The [4Fe-4S] cluster site is built by Cys36, Cys39, Cys42, Cys46, Cys79, Cys82, Cys85, and Cys89.

This sequence belongs to the HdrC family. The heterodisulfide reductase is composed of three subunits; HdrA, HdrB and HdrC. Requires [4Fe-4S] cluster as cofactor.

It functions in the pathway cofactor metabolism; coenzyme M-coenzyme B heterodisulfide reduction; coenzyme B and coenzyme M from coenzyme M-coenzyme B heterodisulfide: step 1/1. Its function is as follows. Part of a complex that catalyzes the reversible reduction of CoM-S-S-CoB to the thiol-coenzymes H-S-CoM (coenzyme M) and H-S-CoB (coenzyme B). This Methanocaldococcus jannaschii (strain ATCC 43067 / DSM 2661 / JAL-1 / JCM 10045 / NBRC 100440) (Methanococcus jannaschii) protein is CoB--CoM heterodisulfide reductase iron-sulfur subunit C 2 (hdrC2).